The primary structure comprises 862 residues: Taxadiene synthase (862 aa).

Mg(2+) is bound by residues aspartate 613, aspartate 617, asparagine 757, threonine 761, and glutamate 765. Positions 613 to 617 (DDMAD) match the DDXXD motif motif.

Belongs to the terpene synthase family. It depends on Mg(2+) as a cofactor.

It carries out the reaction (2E,6E,10E)-geranylgeranyl diphosphate = taxa-4(5),11(12)-diene + diphosphate. The protein operates within alkaloid biosynthesis; taxol biosynthesis; taxa-4(20),11-dien-5alpha-ol from geranylgeranyl diphosphate: step 1/2. Its function is as follows. Catalyzes the cyclization of the ubiquitous isoprenoid intermediate geranylgeranyl diphosphate to taxa-4,11-diene, the parent olefin with a taxane skeleton. The protein is Taxadiene synthase (TDC1) of Taxus brevifolia (Pacific yew).